Here is a 198-residue protein sequence, read N- to C-terminus: Glycerol-3-phosphate acyltransferase (198 aa).

A run of 5 helical transmembrane segments spans residues 2–22, 53–73, 79–99, 113–133, and 152–172; these read IIDL…FGVL, LGFI…VIAT, PFMY…SCFL, VLIP…TFFI, and IILF…IMAL.

Belongs to the PlsY family. In terms of assembly, probably interacts with PlsX.

The protein resides in the cell membrane. The catalysed reaction is an acyl phosphate + sn-glycerol 3-phosphate = a 1-acyl-sn-glycero-3-phosphate + phosphate. The protein operates within lipid metabolism; phospholipid metabolism. Catalyzes the transfer of an acyl group from acyl-phosphate (acyl-PO(4)) to glycerol-3-phosphate (G3P) to form lysophosphatidic acid (LPA). This enzyme utilizes acyl-phosphate as fatty acyl donor, but not acyl-CoA or acyl-ACP. The chain is Glycerol-3-phosphate acyltransferase from Lawsonia intracellularis (strain PHE/MN1-00).